Reading from the N-terminus, the 153-residue chain is Aminoglycoside N(6')-acetyltransferase type 1 (153 aa).

An N-acetyltransferase domain is found at 6–153; sequence PTIRQATPAD…YFRMPLEPSA (148 aa). Substrate contacts are provided by Trp27, Tyr70, Glu83, Asp119, and Glu140.

In terms of assembly, homodimer.

The enzyme catalyses kanamycin B + acetyl-CoA = N(6')-acetylkanamycin B + CoA + H(+). Its function is as follows. Catalyzes the transfer of an acetyl group from acetyl-CoA to the 6'-amino group of aminoglycoside molecules conferring resistance to antibiotics containing the purpurosamine ring including amikacin, gentamicin, kanamycin B, tobramycin, netilmicin, and isepamicin. The chain is Aminoglycoside N(6')-acetyltransferase type 1 from Stenotrophomonas maltophilia (Pseudomonas maltophilia).